Consider the following 453-residue polypeptide: MDYANRHVTVVGLGGSGLAAARYLAAHGARVRVADANPSAERLAELERCLPGVEVMVGAFDDATFAGAELLVVSPGVPLANPAIAAFRRAGGEVVGDIEILARAIQGDGSKVIAITGSNGKSTVTSLVGHLCEAAGLDTVVAGNIGLAVLEALLAREQSGKRPDVWVLELSSFQLESTFSLAADAATVLNISEDHLDRYADLLDYAHAKTRVFNGKGVQVLNKDDALVRAMVRPGHPVKWFSLNGAADYALARNGGYWLKVDGEKVFDCADMQLQGLHNAANALAALGLCQGIGLPLEKLLDGLKTFRGLAHRVELVDEFDGIAFIDDSKGTNVGATEAALNGMTRQVVLIAGGDGKGQDFAPLKPACQRIARAVLLIGRDAGRIEAALEDSGLALERCDTLEEATRRAAALARPGDVVLLSPACASLDMFKNYAHRAQVFIDTVAAVKAARA.

117 to 123 (GSNGKST) serves as a coordination point for ATP.

Belongs to the MurCDEF family.

Its subcellular location is the cytoplasm. The enzyme catalyses UDP-N-acetyl-alpha-D-muramoyl-L-alanine + D-glutamate + ATP = UDP-N-acetyl-alpha-D-muramoyl-L-alanyl-D-glutamate + ADP + phosphate + H(+). Its pathway is cell wall biogenesis; peptidoglycan biosynthesis. Its function is as follows. Cell wall formation. Catalyzes the addition of glutamate to the nucleotide precursor UDP-N-acetylmuramoyl-L-alanine (UMA). This is UDP-N-acetylmuramoylalanine--D-glutamate ligase from Chromobacterium violaceum (strain ATCC 12472 / DSM 30191 / JCM 1249 / CCUG 213 / NBRC 12614 / NCIMB 9131 / NCTC 9757 / MK).